The sequence spans 505 residues: ATP synthase subunit alpha (505 aa).

171-178 lines the ATP pocket; sequence GDRQTGKT.

The protein belongs to the ATPase alpha/beta chains family. In terms of assembly, F-type ATPases have 2 components, CF(1) - the catalytic core - and CF(0) - the membrane proton channel. CF(1) has five subunits: alpha(3), beta(3), gamma(1), delta(1), epsilon(1). CF(0) has three main subunits: a(1), b(2) and c(9-12). The alpha and beta chains form an alternating ring which encloses part of the gamma chain. CF(1) is attached to CF(0) by a central stalk formed by the gamma and epsilon chains, while a peripheral stalk is formed by the delta and b chains.

It localises to the cell inner membrane. The enzyme catalyses ATP + H2O + 4 H(+)(in) = ADP + phosphate + 5 H(+)(out). Its function is as follows. Produces ATP from ADP in the presence of a proton gradient across the membrane. The alpha chain is a regulatory subunit. The chain is ATP synthase subunit alpha from Campylobacter concisus (strain 13826).